A 130-amino-acid polypeptide reads, in one-letter code: MKIFGRVVSGFGEGKYFVGLIPYKNKFKELTGFTPYEGTLNIKLKTYFDIDKYDPLEFDGFEIDGKEYFGGKVLLVTLFNKSGKFVDCAIVSPKKTDHSKKTLEIIAPVNLRKFLSLKNLDIVKIIQALK.

10–15 (GFGEGK) is a binding site for CDP. Mg(2+)-binding residues include Thr39 and Asn41. Positions 96 and 104 each coordinate FMN. Residue 109–112 (VNLR) coordinates CDP.

Belongs to the archaeal riboflavin kinase family. It depends on Mg(2+) as a cofactor.

The catalysed reaction is riboflavin + CTP = CDP + FMN + H(+). It participates in cofactor biosynthesis; FMN biosynthesis; FMN from riboflavin (CTP route): step 1/1. In terms of biological role, catalyzes the CTP-dependent phosphorylation of riboflavin (vitamin B2) to form flavin mononucleotide (FMN). This chain is Riboflavin kinase, found in Methanococcus vannielii (strain ATCC 35089 / DSM 1224 / JCM 13029 / OCM 148 / SB).